Consider the following 86-residue polypeptide: RNA-binding protein Hfq (86 aa).

One can recognise a Sm domain in the interval 9 to 68; it reads DPYLNTLRKEKVPVSIYLVNGIKLQGQIESFDQFVVLLKNTVSQMVYKHAISTVVPARPV. Positions 66 to 86 are disordered; that stretch reads RPVRLPSPSDAEHGDSEPGNA. The segment covering 75-86 has biased composition (basic and acidic residues); sequence DAEHGDSEPGNA.

This sequence belongs to the Hfq family. As to quaternary structure, homohexamer.

RNA chaperone that binds small regulatory RNA (sRNAs) and mRNAs to facilitate mRNA translational regulation in response to envelope stress, environmental stress and changes in metabolite concentrations. Also binds with high specificity to tRNAs. The polypeptide is RNA-binding protein Hfq (Pseudomonas entomophila (strain L48)).